A 406-amino-acid polypeptide reads, in one-letter code: UPF0761 membrane protein NMB0524 (406 aa).

Transmembrane regions (helical) follow at residues 43–63, 100–120, 139–159, 176–196, 210–230, and 248–268; these read LLALVPVLTVMVAVASIFPVF, LTAIGSVMLVVTSLMLIRTID, FLVYWALLTFGPLSLGVGISF, WSGALRTAATLTFMTLLLWGL, AFVGALATAFCLETARSLFTW, and VPFFLLWLNLLWTLVLGGAVL.

Belongs to the UPF0761 family.

It is found in the cell inner membrane. The polypeptide is UPF0761 membrane protein NMB0524 (Neisseria meningitidis serogroup B (strain ATCC BAA-335 / MC58)).